The chain runs to 2188 residues: Tiggrin (2188 aa).

The N-terminal stretch at 1–18 (MRALGGITLLLAVAICQG) is a signal peptide. 4 coiled-coil regions span residues 570-635 (SRLE…EHIK), 1009-1050 (LKNL…EIES), 1312-1343 (TFVE…EIEE), and 1613-1641 (KQQR…AQYH). The tract at residues 1984 to 2188 (IFSKDRGDQP…FWEKLKEKLG (205 aa)) is disordered. Basic and acidic residues predominate over residues 1985-1998 (FSKDRGDQPPHTYD). A Cell attachment site motif is present at residues 1989 to 1991 (RGD). A compositionally biased stretch (acidic residues) spans 2000-2009 (SFVEGDEPGL). A compositionally biased stretch (pro residues) spans 2016–2033 (PRPPNPAPIVSTPKPPLP). Low complexity-rich tracts occupy residues 2057-2077 (GSAS…ASAS) and 2091-2101 (QQEVDLGQQQQ). A compositionally biased stretch (polar residues) spans 2115–2139 (GQQTQVEDTDWNQQAEDLGQQQQVQ). Residues 2148–2165 (QTQGHSSSSNSRSQPLQQ) are compositionally biased toward low complexity. The segment covering 2179-2188 (FWEKLKEKLG) has biased composition (basic and acidic residues).

In terms of processing, O-glycosylation by pgant3 is required for proper secretion and localization to the basal cell layer interface during wing development. In embryos, expressed in the apodemes (muscle attachment sites) of the major longitudinal muscles 4, 6, 7, 12 and 13 and the wide dorsal oblique muscles 9 and 10, in hemocytes, in fat body cells, in basement membranes surrounding the gut and in the commissures of the ventral nerve cord. Expressed in larval imaginal wing disk and in pupal wing. In adult flies, expressed in the jump muscle (at protein level).

The protein resides in the secreted. The protein localises to the extracellular space. It is found in the extracellular matrix. Functions as a ligand for integrin alpha-PS2/beta-PS. Required in larvae for proper muscle structure and function. Involved in the regulation of cell adhesion during wing development. This is Tiggrin from Drosophila melanogaster (Fruit fly).